The following is a 601-amino-acid chain: Glutathione-regulated potassium-efflux system protein KefB (601 aa).

13 consecutive transmembrane segments (helical) span residues 4 to 24 (SDLL…VPLA), 29 to 49 (IGAV…GLGF), 55 to 75 (EILH…GLEL), 87 to 107 (IFGV…GLLM), 115 to 135 (AAVV…LQLM), 152 to 172 (VLLF…LLAG), 177 to 197 (HVNW…LIGG), 207 to 227 (FIAS…LVLG), 230 to 250 (LFME…GVLL), 268 to 288 (GLLL…GVLY), 291 to 311 (LLWV…VLYL), 326 to 346 (FAGV…LPAS), and 356 to 376 (ALLL…MKGI). The RCK N-terminal domain maps to 400 to 519 (KPQVIIVGFG…AGVTQFSRET (120 aa)).

The protein belongs to the monovalent cation:proton antiporter 2 (CPA2) transporter (TC 2.A.37) family. KefB subfamily. Interacts with the regulatory subunit KefG.

The protein resides in the cell inner membrane. In terms of biological role, pore-forming subunit of a potassium efflux system that confers protection against electrophiles. Catalyzes K(+)/H(+) antiport. This is Glutathione-regulated potassium-efflux system protein KefB from Klebsiella pneumoniae (strain 342).